A 290-amino-acid chain; its full sequence is Pirin (290 aa).

Residues H56, H58, H101, and E103 each coordinate Fe cation.

It belongs to the pirin family. May interact with NF1/CTF1. Interacts with BCL3. Identified in a complex comprised of PIR, BLC3, NFKB1 and target DNA. The cofactor is Fe cation. In terms of tissue distribution, highly expressed in a subset of melanomas. Detected at very low levels in most tissues (at protein level). Expressed in all tissues, with highest level of expression in heart and liver.

The protein resides in the nucleus. It is found in the cytoplasm. It catalyses the reaction quercetin + O2 = 2-(3,4-dihydroxybenzoyloxy)-4,6-dihydroxybenzoate + CO. The protein operates within flavonoid metabolism; quercetin degradation. Inhibited by kojic acid, sodium diethyldithiocarbamate and 1,10-phenanthroline monohydrochloride. Functionally, transcriptional coregulator of NF-kappa-B which facilitates binding of NF-kappa-B proteins to target kappa-B genes in a redox-state-dependent manner. May be required for efficient terminal myeloid maturation of hematopoietic cells. Has quercetin 2,3-dioxygenase activity (in vitro). This is Pirin (PIR) from Homo sapiens (Human).